Reading from the N-terminus, the 217-residue chain is Phosphatidylserine decarboxylase proenzyme (217 aa).

Ser183 functions as the Schiff-base intermediate with substrate; via pyruvic acid in the catalytic mechanism. Ser183 is subject to Pyruvic acid (Ser); by autocatalysis.

This sequence belongs to the phosphatidylserine decarboxylase family. PSD-A subfamily. Heterodimer of a large membrane-associated beta subunit and a small pyruvoyl-containing alpha subunit. Pyruvate serves as cofactor. Is synthesized initially as an inactive proenzyme. Formation of the active enzyme involves a self-maturation process in which the active site pyruvoyl group is generated from an internal serine residue via an autocatalytic post-translational modification. Two non-identical subunits are generated from the proenzyme in this reaction, and the pyruvate is formed at the N-terminus of the alpha chain, which is derived from the carboxyl end of the proenzyme. The post-translation cleavage follows an unusual pathway, termed non-hydrolytic serinolysis, in which the side chain hydroxyl group of the serine supplies its oxygen atom to form the C-terminus of the beta chain, while the remainder of the serine residue undergoes an oxidative deamination to produce ammonia and the pyruvoyl prosthetic group on the alpha chain.

It localises to the cell membrane. The enzyme catalyses a 1,2-diacyl-sn-glycero-3-phospho-L-serine + H(+) = a 1,2-diacyl-sn-glycero-3-phosphoethanolamine + CO2. It participates in phospholipid metabolism; phosphatidylethanolamine biosynthesis; phosphatidylethanolamine from CDP-diacylglycerol: step 2/2. Catalyzes the formation of phosphatidylethanolamine (PtdEtn) from phosphatidylserine (PtdSer). This Cupriavidus pinatubonensis (strain JMP 134 / LMG 1197) (Cupriavidus necator (strain JMP 134)) protein is Phosphatidylserine decarboxylase proenzyme.